Reading from the N-terminus, the 631-residue chain is 1-deoxy-D-xylulose-5-phosphate synthase (631 aa).

Residues His-72 and 113 to 115 (GHA) each bind thiamine diphosphate. Asp-144 is a Mg(2+) binding site. Thiamine diphosphate-binding positions include 145–146 (GA), Asn-174, Tyr-287, and Glu-370. Mg(2+) is bound at residue Asn-174.

This sequence belongs to the transketolase family. DXPS subfamily. In terms of assembly, homodimer. Mg(2+) is required as a cofactor. Thiamine diphosphate serves as cofactor.

The catalysed reaction is D-glyceraldehyde 3-phosphate + pyruvate + H(+) = 1-deoxy-D-xylulose 5-phosphate + CO2. It functions in the pathway metabolic intermediate biosynthesis; 1-deoxy-D-xylulose 5-phosphate biosynthesis; 1-deoxy-D-xylulose 5-phosphate from D-glyceraldehyde 3-phosphate and pyruvate: step 1/1. Its function is as follows. Catalyzes the acyloin condensation reaction between C atoms 2 and 3 of pyruvate and glyceraldehyde 3-phosphate to yield 1-deoxy-D-xylulose-5-phosphate (DXP). This is 1-deoxy-D-xylulose-5-phosphate synthase from Prochlorococcus marinus (strain MIT 9515).